Consider the following 464-residue polypeptide: Glycosyl hydrolase family 109 protein 1 (464 aa).

An N-terminal signal peptide occupies residues 1–16 (MFKHLNALFIGLALFA). The N-palmitoyl cysteine moiety is linked to residue Cys17. Cys17 carries the S-diacylglycerol cysteine lipid modification. Residues 63 to 64 (MR), Asp85, 134 to 137 (WKHH), 154 to 155 (EV), and Asn183 each bind NAD(+). Substrate contacts are provided by residues Tyr212, Arg228, 240-243 (YATH), and Tyr318. Tyr240 provides a ligand contact to NAD(+).

This sequence belongs to the Gfo/Idh/MocA family. Glycosyl hydrolase 109 subfamily. NAD(+) serves as cofactor.

The protein localises to the cell membrane. In terms of biological role, glycosidase. Has no alpha-N-acetylgalactosaminidase activity. In Bacteroides fragilis (strain ATCC 25285 / DSM 2151 / CCUG 4856 / JCM 11019 / LMG 10263 / NCTC 9343 / Onslow / VPI 2553 / EN-2), this protein is Glycosyl hydrolase family 109 protein 1.